The sequence spans 469 residues: tRNA modification GTPase MnmE (469 aa).

The (6S)-5-formyl-5,6,7,8-tetrahydrofolate site is built by arginine 38, glutamate 95, and arginine 134. The TrmE-type G domain occupies 230–392; sequence GIRVALVGPP…LRRGLAALVD (163 aa). Residues 240 to 245, 259 to 265, and 284 to 287 each bind GTP; these read NAGKSS, SAQAGTT, and DTAG. Positions 244 and 265 each coordinate Mg(2+). Position 468 (lysine 468) interacts with (6S)-5-formyl-5,6,7,8-tetrahydrofolate.

This sequence belongs to the TRAFAC class TrmE-Era-EngA-EngB-Septin-like GTPase superfamily. TrmE GTPase family. As to quaternary structure, homodimer. Heterotetramer of two MnmE and two MnmG subunits. K(+) serves as cofactor.

Its subcellular location is the cytoplasm. Functionally, exhibits a very high intrinsic GTPase hydrolysis rate. Involved in the addition of a carboxymethylaminomethyl (cmnm) group at the wobble position (U34) of certain tRNAs, forming tRNA-cmnm(5)s(2)U34. In Halorhodospira halophila (strain DSM 244 / SL1) (Ectothiorhodospira halophila (strain DSM 244 / SL1)), this protein is tRNA modification GTPase MnmE.